The sequence spans 325 residues: 2-dehydro-3-deoxygluconokinase (325 aa).

Substrate is bound by residues 49–53, Tyr-105, 121–123, and Arg-181; these read GSEAN and YYR. Residues 179 to 181, 240 to 245, and 269 to 272 contribute to the ATP site; these read NIR, KLGAEG, and GAGD. Residues Asp-272 and Asp-308 each contribute to the substrate site. Asp-272 serves as the catalytic Proton acceptor.

The protein belongs to the carbohydrate kinase PfkB family. Homohexamer; trimer of dimers.

It carries out the reaction 2-dehydro-3-deoxy-D-gluconate + ATP = 2-dehydro-3-deoxy-6-phospho-D-gluconate + ADP + H(+). The protein operates within carbohydrate acid metabolism; 2-dehydro-3-deoxy-D-gluconate degradation; D-glyceraldehyde 3-phosphate and pyruvate from 2-dehydro-3-deoxy-D-gluconate: step 1/2. Functionally, involved in the degradation of glucose via the semi-phosphorylative Entner-Doudoroff pathway. Catalyzes the phosphorylation of 2-keto-3-deoxygluconate (KDG) yielding 2-keto-3-deoxy-6-phosphogluconate (KDPG). The chain is 2-dehydro-3-deoxygluconokinase (kdgK) from Thermoproteus tenax.